The following is a 206-amino-acid chain: Small ribosomal subunit protein uS4 (206 aa).

One can recognise an S4 RNA-binding domain in the interval 96 to 156 (SRLDNVVYRM…EKSRNQSRIA (61 aa)).

Belongs to the universal ribosomal protein uS4 family. As to quaternary structure, part of the 30S ribosomal subunit. Contacts protein S5. The interaction surface between S4 and S5 is involved in control of translational fidelity.

Functionally, one of the primary rRNA binding proteins, it binds directly to 16S rRNA where it nucleates assembly of the body of the 30S subunit. In terms of biological role, with S5 and S12 plays an important role in translational accuracy. This is Small ribosomal subunit protein uS4 from Hydrogenovibrio crunogenus (strain DSM 25203 / XCL-2) (Thiomicrospira crunogena).